A 101-amino-acid polypeptide reads, in one-letter code: Apolipoprotein C-II (101 aa).

The N-terminal stretch at 1 to 22 (MGIRYLLVLVLVLLVLGCEVQG) is a signal peptide. Residues 66-74 (TMDEKIREI) form a lipid binding region. The lipoprotein lipase cofactor stretch occupies residues 78–101 (STAAVSTYAGIFTDQLLSMLKGDQ).

It belongs to the apolipoprotein C2 family. Post-translationally, proapolipoprotein C-II is synthesized as a sialic acid containing glycoprotein which is subsequently desialylated prior to its proteolytic processing. Proapolipoprotein C-II, the major form found in plasma undergoes proteolytic cleavage of its N-terminal hexapeptide to generate apolipoprotein C-II, which occurs as the minor form in plasma.

It localises to the secreted. Component of chylomicrons, very low-density lipoproteins (VLDL), low-density lipoproteins (LDL), and high-density lipoproteins (HDL) in plasma. Plays an important role in lipoprotein metabolism as an activator of lipoprotein lipase. Both proapolipoprotein C-II and apolipoprotein C-II can activate lipoprotein lipase. The protein is Apolipoprotein C-II (APOC2) of Phoca vitulina (Harbor seal).